The following is a 273-amino-acid chain: Putative phosphoenolpyruvate synthase regulatory protein (273 aa).

Residue 153-160 participates in ADP binding; that stretch reads AVSRAGKT.

It belongs to the pyruvate, phosphate/water dikinase regulatory protein family. PSRP subfamily.

It carries out the reaction [pyruvate, water dikinase] + ADP = [pyruvate, water dikinase]-phosphate + AMP + H(+). It catalyses the reaction [pyruvate, water dikinase]-phosphate + phosphate + H(+) = [pyruvate, water dikinase] + diphosphate. In terms of biological role, bifunctional serine/threonine kinase and phosphorylase involved in the regulation of the phosphoenolpyruvate synthase (PEPS) by catalyzing its phosphorylation/dephosphorylation. This Xylella fastidiosa (strain 9a5c) protein is Putative phosphoenolpyruvate synthase regulatory protein.